The primary structure comprises 475 residues: Nucleoporin-like protein amo1 (475 aa).

The C3H1-type zinc-finger motif lies at Met1–Pro25. Polar residues predominate over residues Asp165–Thr182. Disordered regions lie at residues Asp165 to Gly208 and Asn220 to Gly252. The span at Gln183 to Asn204 shows a compositional bias: low complexity. Positions Asn220–Asn242 are enriched in polar residues. The span at Pro243–Gly252 shows a compositional bias: low complexity.

It is found in the nucleus. Its function is as follows. Involved in the cell polarity process where it is required for the correct termination of microtubule growth at the cell ends during interphase. The sequence is that of Nucleoporin-like protein amo1 (amo1) from Schizosaccharomyces pombe (strain 972 / ATCC 24843) (Fission yeast).